Here is a 131-residue protein sequence, read N- to C-terminus: Lymphocyte antigen 6E (131 aa).

The first 20 residues, 1–20 (MKIFLPVLLAALLGVERASS), serve as a signal peptide directing secretion. Positions 21–101 (LMCFSCLNQK…CCQSFLCNFS (81 aa)) constitute a UPAR/Ly6 domain. Intrachain disulfides connect Cys23–Cys48, Cys26–Cys35, Cys41–Cys71, Cys75–Cys92, and Cys93–Cys98. Asn99 carries N-linked (GlcNAc...) asparagine glycosylation. Ser101 carries GPI-anchor amidated serine lipidation. The propeptide at 102–131 (AADGGLRASVTLLGAGLLLSLLPALLRFGP) is removed in mature form.

As to quaternary structure, interacts with CHRNA4. Widely expressed, predominantly in liver, kidney, ovary, spleen and peripheral blood Leukocytes.

The protein resides in the cell membrane. GPI-anchored cell surface protein that regulates T-lymphocytes proliferation, differentiation, and activation. Regulates the T-cell receptor (TCR) signaling by interacting with component CD3Z/CD247 at the plasma membrane, leading to CD3Z/CD247 phosphorylation modulation. Restricts the entry of human coronaviruses, including SARS-CoV, MERS-CoV and SARS-CoV-2, by interfering with spike protein-mediated membrane fusion. Also plays an essential role in placenta formation by acting as the main receptor for syncytin-A (SynA). Therefore, participates in the normal fusion of syncytiotrophoblast layer I (SynT-I) and in the proper morphogenesis of both fetal and maternal vasculatures within the placenta. May also act as a modulator of nicotinic acetylcholine receptors (nAChRs) activity. Functionally, (Microbial infection) Promotes entry, likely through an enhanced virus-cell fusion process, of various viruses including HIV-1, West Nile virus, dengue virus and Zika virus. In contrast, the paramyxovirus PIV5, which enters at the plasma membrane, does not require LY6E. Mechanistically, adopts a microtubule-like organization upon viral infection and enhances viral uncoating after endosomal escape. This is Lymphocyte antigen 6E from Homo sapiens (Human).